Here is a 281-residue protein sequence, read N- to C-terminus: Bifunctional protein FolD (281 aa).

Residues 164 to 166 (GRS), Ser189, and Ile230 each bind NADP(+).

This sequence belongs to the tetrahydrofolate dehydrogenase/cyclohydrolase family. Homodimer.

It catalyses the reaction (6R)-5,10-methylene-5,6,7,8-tetrahydrofolate + NADP(+) = (6R)-5,10-methenyltetrahydrofolate + NADPH. The catalysed reaction is (6R)-5,10-methenyltetrahydrofolate + H2O = (6R)-10-formyltetrahydrofolate + H(+). The protein operates within one-carbon metabolism; tetrahydrofolate interconversion. Its function is as follows. Catalyzes the oxidation of 5,10-methylenetetrahydrofolate to 5,10-methenyltetrahydrofolate and then the hydrolysis of 5,10-methenyltetrahydrofolate to 10-formyltetrahydrofolate. This is Bifunctional protein FolD from Pelagibacter ubique (strain HTCC1062).